The primary structure comprises 166 residues: Endoribonuclease YbeY (166 aa).

The Zn(2+) site is built by His132, His136, and His142.

Belongs to the endoribonuclease YbeY family. Zn(2+) serves as cofactor.

It is found in the cytoplasm. In terms of biological role, single strand-specific metallo-endoribonuclease involved in late-stage 70S ribosome quality control and in maturation of the 3' terminus of the 16S rRNA. The protein is Endoribonuclease YbeY of Clostridium botulinum (strain Kyoto / Type A2).